A 663-amino-acid chain; its full sequence is DNA topoisomerase 4 subunit B (663 aa).

ATP contacts are provided by residues Tyr7, Asn47, Asp74, 114 to 120, and Lys341; that span reads GLHGVGA. Positions 386–416 are disordered; that stretch reads REAARKAREDARSGKKNKRKDTLLSGKLTPA. Residues 387-398 are compositionally biased toward basic and acidic residues; it reads EAARKAREDARS. Residues 424-538 enclose the Toprim domain; the sequence is NELYLVEGDS…AGRVFIALPP (115 aa). Residues Glu430, Asp503, and Asp505 each coordinate Mg(2+).

The protein belongs to the type II topoisomerase family. ParE type 2 subfamily. As to quaternary structure, heterotetramer composed of ParC and ParE. Mg(2+) is required as a cofactor. Mn(2+) serves as cofactor. It depends on Ca(2+) as a cofactor.

It catalyses the reaction ATP-dependent breakage, passage and rejoining of double-stranded DNA.. Functionally, topoisomerase IV is essential for chromosome segregation. It relaxes supercoiled DNA. Performs the decatenation events required during the replication of a circular DNA molecule. In Staphylococcus aureus (strain NCTC 8325 / PS 47), this protein is DNA topoisomerase 4 subunit B.